A 135-amino-acid polypeptide reads, in one-letter code: Ribosome-binding factor A (135 aa).

The protein belongs to the RbfA family. As to quaternary structure, monomer. Binds 30S ribosomal subunits, but not 50S ribosomal subunits or 70S ribosomes.

The protein resides in the cytoplasm. One of several proteins that assist in the late maturation steps of the functional core of the 30S ribosomal subunit. Associates with free 30S ribosomal subunits (but not with 30S subunits that are part of 70S ribosomes or polysomes). Required for efficient processing of 16S rRNA. May interact with the 5'-terminal helix region of 16S rRNA. This is Ribosome-binding factor A from Rhodopseudomonas palustris (strain HaA2).